Consider the following 281-residue polypeptide: Shikimate dehydrogenase (NADP(+)) (281 aa).

Residues Ser-15–Ser-17 and Thr-62 contribute to the shikimate site. Lys-66 serves as the catalytic Proton acceptor. The shikimate site is built by Asn-87 and Asp-102. NADP(+) contacts are provided by residues Gly-127–Ser-131, Asn-151–Arg-156, and Leu-217. Tyr-219 serves as a coordination point for shikimate. Gly-241 contributes to the NADP(+) binding site.

Belongs to the shikimate dehydrogenase family. Homodimer.

It carries out the reaction shikimate + NADP(+) = 3-dehydroshikimate + NADPH + H(+). It functions in the pathway metabolic intermediate biosynthesis; chorismate biosynthesis; chorismate from D-erythrose 4-phosphate and phosphoenolpyruvate: step 4/7. Involved in the biosynthesis of the chorismate, which leads to the biosynthesis of aromatic amino acids. Catalyzes the reversible NADPH linked reduction of 3-dehydroshikimate (DHSA) to yield shikimate (SA). This Stenotrophomonas maltophilia (strain R551-3) protein is Shikimate dehydrogenase (NADP(+)).